The sequence spans 584 residues: UvrABC system protein C (584 aa).

The 78-residue stretch at 12–89 (NKPGCYLFLN…IKKYRPKYNV (78 aa)) folds into the GIY-YIG domain. Residues 194–229 (NQVKQTLVKQMQKASDNLQFEQAKRIKDQITSLDFI) enclose the UVR domain.

It belongs to the UvrC family. In terms of assembly, interacts with UvrB in an incision complex.

It is found in the cytoplasm. In terms of biological role, the UvrABC repair system catalyzes the recognition and processing of DNA lesions. UvrC both incises the 5' and 3' sides of the lesion. The N-terminal half is responsible for the 3' incision and the C-terminal half is responsible for the 5' incision. This chain is UvrABC system protein C, found in Mycoplasma capricolum subsp. capricolum (strain California kid / ATCC 27343 / NCTC 10154).